The following is a 469-amino-acid chain: Tryptophan biosynthesis protein TrpCF (469 aa).

Residues 1-271 (MSEQLSEHIS…LAVRKIVLGE (271 aa)) form an indole-3-glycerol phosphate synthase region. Positions 272–469 (HKVCGLTHPD…QQVFQQLRNY (198 aa)) are N-(5'-phosphoribosyl)anthranilate isomerase.

It in the N-terminal section; belongs to the TrpC family. In the C-terminal section; belongs to the TrpF family. In terms of assembly, monomer.

The enzyme catalyses N-(5-phospho-beta-D-ribosyl)anthranilate = 1-(2-carboxyphenylamino)-1-deoxy-D-ribulose 5-phosphate. It catalyses the reaction 1-(2-carboxyphenylamino)-1-deoxy-D-ribulose 5-phosphate + H(+) = (1S,2R)-1-C-(indol-3-yl)glycerol 3-phosphate + CO2 + H2O. Its pathway is amino-acid biosynthesis; L-tryptophan biosynthesis; L-tryptophan from chorismate: step 3/5. It functions in the pathway amino-acid biosynthesis; L-tryptophan biosynthesis; L-tryptophan from chorismate: step 4/5. Bifunctional enzyme that catalyzes two sequential steps of tryptophan biosynthetic pathway. The first reaction is catalyzed by the isomerase, coded by the TrpF domain; the second reaction is catalyzed by the synthase, coded by the TrpC domain. The protein is Tryptophan biosynthesis protein TrpCF (trpCF) of Vibrio cholerae serotype O1 (strain ATCC 39315 / El Tor Inaba N16961).